A 1209-amino-acid polypeptide reads, in one-letter code: Phospholipid-transporting ATPase ID (1209 aa).

Residues 1 to 12 (MTVPKEMPEKWA) are compositionally biased toward basic and acidic residues. The segment at 1 to 36 (MTVPKEMPEKWARAQAPPSWSRKKPSWGTEEERRAR) is disordered. Topologically, residues 1–64 (MTVPKEMPEK…TSKYNILTFL (64 aa)) are cytoplasmic. A helical membrane pass occupies residues 65 to 86 (PVNLFEQFQEVANTYFLFLLIL). Residues 87 to 92 (QLIPQI) lie on the Exoplasmic loop side of the membrane. The chain crosses the membrane as a helical span at residues 93–112 (SSLSWFTTIVPLVLVLTITA). Residues 113 to 295 (VKDATDDYFR…TSIDRLMNTL (183 aa)) lie on the Cytoplasmic side of the membrane. A helical transmembrane segment spans residues 296–317 (VLWIFGFLVCMGVILAIGNAIW). Residues 318–346 (EHEVGMRFQVYLPWDEAVDSAFFSGFLSF) are Exoplasmic loop-facing. The helical transmembrane segment at 347-368 (WSYIIILNTVVPISLYVSVEVI) threads the bilayer. The Cytoplasmic segment spans residues 369–889 (RLGHSYFINW…GRWSYLRMCK (521 aa)). D411 acts as the 4-aspartylphosphate intermediate in catalysis. Residues D411, K412, T413, E515, F556, K579, R613, T693, G694, D695, R807, and K813 each coordinate ATP. A Mg(2+)-binding site is contributed by D411. T413 is a binding site for Mg(2+). D833 is a Mg(2+) binding site. ATP is bound by residues N836 and D837. D837 provides a ligand contact to Mg(2+). A helical transmembrane segment spans residues 890 to 910 (FLCYFFYKNFAFTMVHFWFGF). Over 911–922 (FCGFSAQTVYDQ) the chain is Exoplasmic loop. The helical transmembrane segment at 923–942 (YFITLYNIVYTSLPVLAMGV) threads the bilayer. Topologically, residues 943–972 (FDQDVPEQRSMEYPKLYEPGQLNLLFNKRE) are cytoplasmic. A helical transmembrane segment spans residues 973-994 (FFICIAQGIYTSVLMFFIPYGV). The Exoplasmic loop portion of the chain corresponds to 995-1008 (FADATRDDGTQLAD). The chain crosses the membrane as a helical span at residues 1009-1031 (YQSFAVTVATSLVIVVSVQIGLD). The Cytoplasmic segment spans residues 1032–1037 (TGYWTA). A helical membrane pass occupies residues 1038 to 1058 (INHFFIWGSLAVYFAILFAMH). Residues 1059-1078 (SNGLFDMFPNQFRFVGNAQN) are Exoplasmic loop-facing. The chain crosses the membrane as a helical span at residues 1079-1103 (TLAQPTVWLTIVLTTVVCIMPVVAF). Over 1104 to 1209 (RFLRLNLKPD…SGGADKPLKG (106 aa)) the chain is Cytoplasmic. A Phosphoserine modification is found at S1175. Positions 1181-1209 (SSSWIESLRRKKSDSASSPSGGADKPLKG) are disordered. Residues 1195–1209 (SASSPSGGADKPLKG) are compositionally biased toward low complexity.

The protein belongs to the cation transport ATPase (P-type) (TC 3.A.3) family. Type IV subfamily. In terms of assembly, component of a P4-ATPase flippase complex which consists of a catalytic alpha subunit ATP8B2 and an accessory beta subunit TMEM30A or TMEM30B. Requires Mg(2+) as cofactor. In terms of tissue distribution, isoform 3 is ubiquitous, with highest expression in aorta, cerebellum and uterus.

Its subcellular location is the cell membrane. It is found in the endoplasmic reticulum membrane. The enzyme catalyses ATP + H2O + phospholipidSide 1 = ADP + phosphate + phospholipidSide 2.. The catalysed reaction is a 1,2-diacyl-sn-glycero-3-phosphocholine(out) + ATP + H2O = a 1,2-diacyl-sn-glycero-3-phosphocholine(in) + ADP + phosphate + H(+). In terms of biological role, catalytic component of P4-ATPase flippase complex, which catalyzes the hydrolysis of ATP coupled to the transport of phosphatidylcholine (PC) from the outer to the inner leaflet of the plasma membrane. May contribute to the maintenance of membrane lipid asymmetry. This Homo sapiens (Human) protein is Phospholipid-transporting ATPase ID.